The following is a 142-amino-acid chain: Large ribosomal subunit protein uL23 (142 aa).

The protein belongs to the universal ribosomal protein uL23 family. In terms of assembly, component of the large ribosomal subunit. Mature ribosomes consist of a small (40S) and a large (60S) subunit. The 40S subunit contains about 32 different proteins and 1 molecule of RNA (18S). The 60S subunit contains 45 different proteins and 3 molecules of RNA (25S, 5.8S and 5S).

The protein resides in the cytoplasm. Component of the ribosome, a large ribonucleoprotein complex responsible for the synthesis of proteins in the cell. The small ribosomal subunit (SSU) binds messenger RNAs (mRNAs) and translates the encoded message by selecting cognate aminoacyl-transfer RNA (tRNA) molecules. The large subunit (LSU) contains the ribosomal catalytic site termed the peptidyl transferase center (PTC), which catalyzes the formation of peptide bonds, thereby polymerizing the amino acids delivered by tRNAs into a polypeptide chain. The nascent polypeptides leave the ribosome through a tunnel in the LSU and interact with protein factors that function in enzymatic processing, targeting, and the membrane insertion of nascent chains at the exit of the ribosomal tunnel. RPL25 is a major component of the universal docking site for these factors at the polypeptide exit tunnel. The protein is Large ribosomal subunit protein uL23 of Candida albicans (strain SC5314 / ATCC MYA-2876) (Yeast).